Reading from the N-terminus, the 325-residue chain is Glutarate 2-hydroxylase (325 aa).

H160, D162, and H292 together coordinate Fe cation.

Belongs to the glutarate hydroxylase family. In terms of assembly, homotetramer. Fe(2+) is required as a cofactor.

The enzyme catalyses glutarate + 2-oxoglutarate + O2 = (S)-2-hydroxyglutarate + succinate + CO2. It participates in amino-acid degradation. Its function is as follows. Acts as an alpha-ketoglutarate-dependent dioxygenase catalyzing hydroxylation of glutarate (GA) to L-2-hydroxyglutarate (L2HG). Functions in a L-lysine degradation pathway that proceeds via cadaverine, glutarate and L-2-hydroxyglutarate. The protein is Glutarate 2-hydroxylase of Escherichia coli O6:H1 (strain CFT073 / ATCC 700928 / UPEC).